We begin with the raw amino-acid sequence, 1133 residues long: DNA-directed RNA polymerase III subunit RPC2 (1133 aa).

K186 provides a ligand contact to RNA. R195 is a binding site for DNA. Position 213 (R213) interacts with RNA. Position 432 (D432) interacts with DNA. Residues Q438 and Q692 each contribute to the RNA site. D753 provides a ligand contact to Mg(2+). Positions 896, 904, and 1019 each coordinate RNA. The DNA site is built by R1039, S1040, and R1046. C1080, C1083, C1092, and C1095 together coordinate Zn(2+). A C4-type zinc finger spans residues 1080–1095 (CGQCGLLGYSGWCHYC).

This sequence belongs to the RNA polymerase beta chain family. In terms of assembly, component of the RNA polymerase III (Pol III) complex consisting of 17 subunits: a ten-subunit catalytic core composed of POLR3A/RPC1, POLR3B/RPC2, POLR1C/RPAC1, POLR1D/RPAC2, POLR3K/RPC10, POLR2E/RPABC1, POLR2F/RPABC2, POLR2H/RPABC3, POLR2K/RPABC4 and POLR2L/RPABC5; a mobile stalk composed of two subunits POLR3H/RPC8 and CRCP/RPC9, protruding from the core and functioning primarily in transcription initiation; and additional subunits homologous to general transcription factors of the RNA polymerase II machinery, POLR3C/RPC3-POLR3F/RPC6-POLR3G/RPC7 heterotrimer required for transcription initiation and POLR3D/RPC4-POLR3E/RPC5 heterodimer involved in both transcription initiation and termination. It depends on Mg(2+) as a cofactor.

It localises to the nucleus. Its subcellular location is the cytoplasm. It is found in the cytosol. It catalyses the reaction RNA(n) + a ribonucleoside 5'-triphosphate = RNA(n+1) + diphosphate. Its function is as follows. Catalytic core component of RNA polymerase III (Pol III), a DNA-dependent RNA polymerase which synthesizes small non-coding RNAs using the four ribonucleoside triphosphates as substrates. Synthesizes 5S rRNA, snRNAs, tRNAs and miRNAs from at least 500 distinct genomic loci. Pol III-mediated transcription cycle proceeds through transcription initiation, transcription elongation and transcription termination stages. During transcription initiation, Pol III is recruited to DNA promoters type I, II or III with the help of general transcription factors and other specific initiation factors. Once the polymerase has escaped from the promoter it enters the elongation phase during which RNA is actively polymerized, based on complementarity with the template DNA strand. Transcription termination involves the release of the RNA transcript and polymerase from the DNA. Forms Pol III active center together with the largest subunit POLR3A/RPC1. A single-stranded DNA template strand of the promoter is positioned within the central active site cleft of Pol III. Appends one nucleotide at a time to the 3' end of the nascent RNA, with POLR3A/RPC1 contributing a Mg(2+)-coordinating DxDGD motif, and POLR3B/RPC2 participating in the coordination of a second Mg(2+) ion and providing lysine residues believed to facilitate Watson-Crick base pairing between the incoming nucleotide and template base. Typically, Mg(2+) ions direct a 5' nucleoside triphosphate to form a phosphodiester bond with the 3' hydroxyl of the preceding nucleotide of the nascent RNA, with the elimination of pyrophosphate. Pol III plays a key role in sensing and limiting infection by intracellular bacteria and DNA viruses. Acts as a nuclear and cytosolic DNA sensor involved in innate immune response. Can sense non-self dsDNA that serves as template for transcription into dsRNA. The non-self RNA polymerase III transcripts, such as Epstein-Barr virus-encoded RNAs (EBERs) induce type I interferon and NF-kappa-B through the RIG-I pathway. This Homo sapiens (Human) protein is DNA-directed RNA polymerase III subunit RPC2.